Consider the following 261-residue polypeptide: MKILICNDDGYQASGIIALYEALKIVADVEVVAPEQNNSAKSNALTLHSPMYVQTAANGFRYINGTPADCVHIALTGLLGYRPDLVVSGINNGANMGDDTIYSGTVGAAMEGYLFGIPSIAFSQTEKGWAHIDVAARRARELVEQLMPSLEVVAEGAQPALAPWLLNVNIPNLPDDQIQGVKVARLGRRHAAERVITQTSPRGETMYWIGGAGPAKEAGEGTDFYATSQKFVSITPLHVDLTDHERLPYWEQAAARLTQAH.

Positions 8, 9, 39, and 91 each coordinate a divalent metal cation.

Belongs to the SurE nucleotidase family. A divalent metal cation is required as a cofactor.

It localises to the cytoplasm. It catalyses the reaction a ribonucleoside 5'-phosphate + H2O = a ribonucleoside + phosphate. In terms of biological role, nucleotidase that shows phosphatase activity on nucleoside 5'-monophosphates. This Polaromonas sp. (strain JS666 / ATCC BAA-500) protein is 5'-nucleotidase SurE.